Reading from the N-terminus, the 352-residue chain is Phosphoribosylformylglycinamidine cyclo-ligase (352 aa).

The protein belongs to the AIR synthase family.

It localises to the cytoplasm. It carries out the reaction 2-formamido-N(1)-(5-O-phospho-beta-D-ribosyl)acetamidine + ATP = 5-amino-1-(5-phospho-beta-D-ribosyl)imidazole + ADP + phosphate + H(+). It participates in purine metabolism; IMP biosynthesis via de novo pathway; 5-amino-1-(5-phospho-D-ribosyl)imidazole from N(2)-formyl-N(1)-(5-phospho-D-ribosyl)glycinamide: step 2/2. The polypeptide is Phosphoribosylformylglycinamidine cyclo-ligase (Saccharophagus degradans (strain 2-40 / ATCC 43961 / DSM 17024)).